Consider the following 1473-residue polypeptide: Sulfite reductase [NADPH] subunit beta (1473 aa).

In terms of domain architecture, Flavodoxin-like spans 728 to 876 (LTILFASDGG…AYNLWEPELW (149 aa)). Residues C1328, C1334, C1373, and C1377 each coordinate [4Fe-4S] cluster. C1377 serves as a coordination point for siroheme.

Belongs to the nitrite and sulfite reductase 4Fe-4S domain family. In terms of assembly, alpha(2)-beta(2). The alpha component is a flavoprotein, the beta component is a hemoprotein. It depends on siroheme as a cofactor. Requires [4Fe-4S] cluster as cofactor.

Its subcellular location is the cytoplasm. It carries out the reaction hydrogen sulfide + 3 NADP(+) + 3 H2O = sulfite + 3 NADPH + 4 H(+). It functions in the pathway sulfur metabolism; hydrogen sulfide biosynthesis; hydrogen sulfide from sulfite (NADPH route): step 1/1. Catalyzes the reduction of sulfite to sulfide, one of several activities required for the biosynthesis of L-cysteine from sulfate. This is Sulfite reductase [NADPH] subunit beta (sir1) from Schizosaccharomyces pombe (strain 972 / ATCC 24843) (Fission yeast).